Consider the following 302-residue polypeptide: Probable protein S-acyltransferase 13 (302 aa).

Transmembrane regions (helical) follow at residues 17 to 37 (SIMI…VVVV) and 56 to 76 (VLAF…SVVV). One can recognise a DHHC domain in the interval 116–166 (RYCRKCNQYKPPRSHHCSVCGRCILKMDHHCVWVVNCVGANNYKSFLLFLF). The S-palmitoyl cysteine intermediate role is filled by Cys146. 2 helical membrane passes run 166–186 (FYTF…FLVF) and 204–224 (SFVA…FLIM).

It belongs to the DHHC palmitoyltransferase family.

The protein localises to the cell membrane. The protein resides in the cytoplasmic vesicle membrane. The enzyme catalyses L-cysteinyl-[protein] + hexadecanoyl-CoA = S-hexadecanoyl-L-cysteinyl-[protein] + CoA. Palmitoyl acyltransferase. This is Probable protein S-acyltransferase 13 (PAT13) from Arabidopsis thaliana (Mouse-ear cress).